Reading from the N-terminus, the 176-residue chain is Ribosome maturation factor RimM (176 aa).

The region spanning Glu-99 to Phe-176 is the PRC barrel domain.

The protein belongs to the RimM family. Binds ribosomal protein uS19.

It is found in the cytoplasm. In terms of biological role, an accessory protein needed during the final step in the assembly of 30S ribosomal subunit, possibly for assembly of the head region. Essential for efficient processing of 16S rRNA. May be needed both before and after RbfA during the maturation of 16S rRNA. It has affinity for free ribosomal 30S subunits but not for 70S ribosomes. The protein is Ribosome maturation factor RimM of Psychrobacter sp. (strain PRwf-1).